The sequence spans 266 residues: Enterotoxin type C-1 (266 aa).

Residues 1 to 27 form the signal peptide; the sequence is MNKSRFISCVILIFALILVLFTPNVLA. An intrachain disulfide couples C120 to C137.

It belongs to the staphylococcal/streptococcal toxin family. As to quaternary structure, interacts with host MHC class II molecules composed of alpha/HLA-DRA and beta/HLA-DRB1 chains.

It localises to the secreted. In terms of biological role, staphylococcal enterotoxin that activates the host immune system by binding as unprocessed molecules to major histocompatibility (MHC) complex class II and T-cell receptor (TCR) molecules. In turn, this ternary complex activates a large number of T-lymphocytes initiating a systemic release of pro-inflammatory cytokines. Inhibits SEC1-mediated T-cell activation in the absence of MHC class II by competing with SEC1 for binding to the host TCR. Also causes the intoxication staphylococcal food poisoning syndrome. This Staphylococcus aureus protein is Enterotoxin type C-1 (entC1).